A 563-amino-acid chain; its full sequence is Serine palmitoyltransferase 3 (563 aa).

Over residues 1–29 (MANLNDSAVTNGTLHNPKTQQGKRQSTGC) the composition is skewed to polar residues. Residues 1 to 32 (MANLNDSAVTNGTLHNPKTQQGKRQSTGCVKN) are disordered. A helical transmembrane segment spans residues 59–79 (PLYVYVLTYMGYGIGILFGYL). The residue at position 371 (Lys-371) is an N6-(pyridoxal phosphate)lysine.

The protein belongs to the class-II pyridoxal-phosphate-dependent aminotransferase family. Component of the serine palmitoyltransferase (SPT) complex, which is composed of SPTLC1, SPTLC2 or SPTLC3 and SPTSSA or SPTSSB. The heterodimer consisting of SPTLC1 and SPTLC2/SPTLC3 forms the catalytic core of the enzyme, while SPTSSA or SPTSSB subunits determine substrate specificity. SPT also interacts with ORMDL proteins, especially ORMDL3, which negatively regulate SPT activity in the presence of ceramides. Pyridoxal 5'-phosphate serves as cofactor. As to expression, expressed in white and brown adipose tissues.

Its subcellular location is the endoplasmic reticulum membrane. The catalysed reaction is L-serine + hexadecanoyl-CoA + H(+) = 3-oxosphinganine + CO2 + CoA. The enzyme catalyses dodecanoyl-CoA + L-serine + H(+) = 3-oxotetradecasphinganine + CO2 + CoA. It carries out the reaction tetradecanoyl-CoA + L-serine + H(+) = 3-oxohexadecasphinganine + CO2 + CoA. It catalyses the reaction octadecanoyl-CoA + L-serine + H(+) = 3-oxoeicosasphinganine + CO2 + CoA. The protein operates within lipid metabolism; sphingolipid metabolism. With respect to regulation, SPT complex catalytic activity is negatively regulated by ORMDL proteins, including ORMDL3, in the presence of ceramides. This mechanism allows to maintain ceramide levels at sufficient concentrations for the production of complex sphingolipids, but which prevents the accumulation of ceramides to levels that trigger apoptosis. Component of the serine palmitoyltransferase multisubunit enzyme (SPT) that catalyzes the initial and rate-limiting step in sphingolipid biosynthesis by condensing L-serine and activated acyl-CoA (most commonly palmitoyl-CoA) to form long-chain bases. The SPT complex is composed of SPTLC1, SPTLC2 or SPTLC3 and SPTSSA or SPTSSB. Within this complex, the heterodimer consisting of SPTLC1 and SPTLC2/SPTLC3 forms the catalytic core. The composition of the serine palmitoyltransferase (SPT) complex determines the substrate preference. The SPTLC1-SPTLC2-SPTSSA complex shows a strong preference for C16-CoA substrate, while the SPTLC1-SPTLC3-SPTSSA isozyme uses both C14-CoA and C16-CoA as substrates, with a slight preference for C14-CoA. The SPTLC1-SPTLC2-SPTSSB complex shows a strong preference for C18-CoA substrate, while the SPTLC1-SPTLC3-SPTSSB isozyme displays an ability to use a broader range of acyl-CoAs, without apparent preference. This chain is Serine palmitoyltransferase 3, found in Mus musculus (Mouse).